A 451-amino-acid chain; its full sequence is Ubiquitin hydrolase B (451 aa).

In terms of domain architecture, USP spans Arg19–Val450. A compositionally biased stretch (low complexity) spans Asn83–Pro115. The interval Asn83–Asp154 is disordered. Positions Ile116 to Thr135 are enriched in polar residues. Residue His399 is the Nucleophile of the active site. The active-site Proton acceptor is His408.

Belongs to the peptidase C19 family. In terms of assembly, interacts with mkkA (via F-box/WD40 domains).

The catalysed reaction is Thiol-dependent hydrolysis of ester, thioester, amide, peptide and isopeptide bonds formed by the C-terminal Gly of ubiquitin (a 76-residue protein attached to proteins as an intracellular targeting signal).. Functionally, required for proper prespore cell patterning. Plays a role in stabilizing mkkA by preventing it from being targeted for degradation. ubcB and ubpB differentially control ubiquitination/deubiquitination and degradation of mkkA in a cell-type-specific and temporally regulated manner. The chain is Ubiquitin hydrolase B (ubpB) from Dictyostelium discoideum (Social amoeba).